A 231-amino-acid chain; its full sequence is Modulator of macroautophagy TMEM150B-B (231 aa).

A topological domain (cytoplasmic) is located at residue Met-1. A helical membrane pass occupies residues 2–22 (WAWALLPICLTVWATGGIWIV). The Extracellular segment spans residues 23–50 (YAMSVSNGSVNLSDGFPYISVSGTYPPQ). N-linked (GlcNAc...) asparagine glycans are attached at residues Asn-29 and Asn-33. Residues 51 to 71 (SCVFGQVLNVGAMLAVWISVI) traverse the membrane as a helical segment. Residues 72–83 (RFQQIRDYNCHS) lie on the Cytoplasmic side of the membrane. Residues 84–104 (VLNSVSLATGILCALGTSIVG) form a helical membrane-spanning segment. Residues 105–115 (NFQQSNQLQTH) are Extracellular-facing. Residues 116-136 (LAGAFLAFIIGNVYFWMQTAL) traverse the membrane as a helical segment. Residues 137-150 (TYMVKPKHGGCYIG) lie on the Cytoplasmic side of the membrane. The chain crosses the membrane as a helical span at residues 151 to 171 (PIRFCLSIACTALIVAMAVFL). The Extracellular portion of the chain corresponds to 172–183 (KMNMKSVSAICE). The chain crosses the membrane as a helical span at residues 184–204 (WIVAMILFLLYGLFAVDFWHL). Residues 205–231 (DGHFFHVKKRRTVIPNEMEVSTVTLSI) lie on the Cytoplasmic side of the membrane.

The protein belongs to the DRAM/TMEM150 family.

The protein localises to the cell membrane. It localises to the endosome membrane. Its subcellular location is the cytoplasmic vesicle. The protein resides in the autophagosome membrane. Functionally, modulator of macroautophagy that causes accumulation of autophagosomes under basal conditions and enhances autophagic flux. Represses cell death and promotes long-term clonogenic survival of cells grown in the absence of glucose in a macroautophagy-independent manner. May have some role in extracellular matrix engulfment or growth factor receptor recycling, both of which can modulate cell survival. In Xenopus laevis (African clawed frog), this protein is Modulator of macroautophagy TMEM150B-B.